Here is a 259-residue protein sequence, read N- to C-terminus: Protein-tyrosine phosphatase RolB (259 aa).

The disordered stretch occupies residues 219–259; sequence GISRPAASSPEPDLTLRLSGPDQEGEEGVMKPAAVNLKKEA.

It catalyses the reaction O-phospho-L-tyrosyl-[protein] + H2O = L-tyrosyl-[protein] + phosphate. Induces differentiation and growth of neoplastic roots (hairy roots). Seems to function as a tyrosine phosphatase. The sequence is that of Protein-tyrosine phosphatase RolB (rolB) from Rhizobium rhizogenes (Agrobacterium rhizogenes).